Reading from the N-terminus, the 178-residue chain is Co-chaperone protein p23-1 (178 aa).

One can recognise a CS domain in the interval 2–91 (SRHPTVKWAQ…AESKWWNRLT (90 aa)). Composition is skewed to acidic residues over residues 112-126 (DDED…DFGD) and 136-155 (DTDE…EGET). Positions 112-178 (DDEDKGGEGD…DEEGVNAKKD (67 aa)) are disordered. Residues 157–178 (AETKEKKIDGEKDEEGVNAKKD) are compositionally biased toward basic and acidic residues.

This sequence belongs to the p23/wos2 family. Interacts with HSP90 in an ATP-dependent manner.

Functionally, acts as a co-chaperone for HSP90. The protein is Co-chaperone protein p23-1 of Brassica napus (Rape).